The primary structure comprises 299 residues: Taste receptor type 2 member 4 (299 aa).

Residues 1 to 9 (MLRLFYFSA) are Extracellular-facing. The chain crosses the membrane as a helical span at residues 10–30 (VIASVILNFVGIIMNLFITVV). At 31 to 46 (NCKTWVKSHRISSSDR) the chain is on the cytoplasmic side. The helical transmembrane segment at 47-67 (ILFSLGITRFLMLGLFLVNTI) threads the bilayer. The Extracellular segment spans residues 68–81 (YFVSSNMERSVYLS). The helical transmembrane segment at 82 to 102 (AFFVLCFMFLDSSSLWFVTLL) threads the bilayer. Residues 103–131 (NILYCVKITNFQHSVFLLLKRSISPKIPR) are Cytoplasmic-facing. Residues 132–152 (LLLAFVLISAFTTCLYITLSQ) form a helical membrane-spanning segment. Residues 153 to 172 (ASPFPELVTTRNNTSFNISE) are Extracellular-facing. 3 N-linked (GlcNAc...) asparagine glycosylation sites follow: asparagine 164, asparagine 165, and asparagine 169. The chain crosses the membrane as a helical span at residues 173 to 193 (GILSLVVSLVLSSSLQFIINV). Topologically, residues 194-230 (TSASLLIHSLRRHIQKMQKNATGFWNPQMEAHVGAMK) are cytoplasmic. A helical transmembrane segment spans residues 231–251 (LMVYFLILYIPYSVATLVQYL). Residues 252–262 (PFYAGMDMGTK) lie on the Extracellular side of the membrane. The helical transmembrane segment at 263-283 (SICLIFATLYSPGHSVLIIIT) threads the bilayer. Topologically, residues 284–299 (HPKLKTTAKKILCFKK) are cytoplasmic.

This sequence belongs to the G-protein coupled receptor T2R family.

The protein resides in the membrane. It is found in the cell projection. It localises to the cilium membrane. In terms of biological role, gustducin-coupled receptor implicated in the perception of bitter compounds in the oral cavity and the gastrointestinal tract. Signals through PLCB2 and the calcium-regulated cation channel TRPM5. In airway epithelial cells, binding of denatonium increases the intracellular calcium ion concentration and stimulates ciliary beat frequency. The polypeptide is Taste receptor type 2 member 4 (TAS2R4) (Gorilla gorilla gorilla (Western lowland gorilla)).